The following is an 868-amino-acid chain: MMILPRTGFGRGADSVVLVLLWVLGSVLAKDTAFVEVVLFESSPNGDYTTYTTGLQGRFSRAGATISAEGEIVQMHPLGLCNNNDEEDLYEYGWVGVVKLEQPELDPSCLTVLGKAKRAVQRGATAVIFDVSENPDAIDQLNQVSEDPLKRPVVYVKGADAVKLMNIVNKQKVARARIQHRPPRVRPTEYFDMGIFLAFFVVVSLVCLILLIKIKLKQRRSQSSMNRMAIQALEKMETCKFKAKFKGQREASCGASDSVSSSSTSDCAICLEKYIDGEELRVIPCAHRFHKKCVDPWLLQHHTCPHCRHNIIDQKKGNPGAVCLDPGNPVHGRQQRVVLPVHYPGRVHRAGQVTAYPTRTSMDPHGNPITVLTVDQHPEQGLYPSQSSFIRGYPALHLDHTLNPHHCGLEHRGPAYPQTHTFKRPKFHGRNFSRAACFSQYETMYQHYYFQGLTFPQPEGQPSNGLHKGHNRPFQPGLLYPTVVHMAPASSSRLGDSGSTSGLSCYHGHRSVCSGYLADCPGSDSSSSSGQCHCSSSDSMLDCTEVSNQGVYGSCSTFRSSLSSDYDPYVYRSKSPCRGSAGEAGAVFSAAPPADDTSAPVSGMIDCLQPPGGACYSSGDQLSNCSLEPNCSNHSSVETRELTSTTSAGPLEGNVAERSHNSVKPCGEQGVACNCCFEVPKLNLERKGKEGEDRGHCRWATEAQAVASSQNFYSVSTEQLPSPDHVSYDGLPCCFYTEMTVHRGGANHYAEDCSVNIQYAQTDSDGCMGQGCCELAQRIPIIPEDTDCELGLGPEPQTSLLSSRLTTEREERTSSEDTCDLFFTSGQCRGQVYQQPQDEEARALFSSKCNAVSETQGSSTSSFDGSGL.

Positions 1-29 are cleaved as a signal peptide; the sequence is MMILPRTGFGRGADSVVLVLLWVLGSVLA. Residues 30–193 lie on the Extracellular side of the membrane; sequence KDTAFVEVVL…RVRPTEYFDM (164 aa). The chain crosses the membrane as a helical span at residues 194–214; it reads GIFLAFFVVVSLVCLILLIKI. At 215–868 the chain is on the cytoplasmic side; it reads KLKQRRSQSS…STSSFDGSGL (654 aa). An RING-type; atypical zinc finger spans residues 267 to 308; that stretch reads CAICLEKYIDGEELRVIPCAHRFHKKCVDPWLLQHHTCPHCR. Positions 792-813 are disordered; sequence LGPEPQTSLLSSRLTTEREERT.

This sequence belongs to the ZNRF3 family.

Its subcellular location is the cell membrane. The enzyme catalyses S-ubiquitinyl-[E2 ubiquitin-conjugating enzyme]-L-cysteine + [acceptor protein]-L-lysine = [E2 ubiquitin-conjugating enzyme]-L-cysteine + N(6)-ubiquitinyl-[acceptor protein]-L-lysine.. Its pathway is protein modification; protein ubiquitination. Functionally, E3 ubiquitin-protein ligase that acts as a negative regulator of the Wnt signaling pathway by mediating the ubiquitination and subsequent degradation of Wnt receptor complex components. Along with RSPO2 and RNF43, constitutes a master switch that governs limb specification. The protein is E3 ubiquitin-protein ligase znrf3 (znrf3) of Danio rerio (Zebrafish).